The following is a 278-amino-acid chain: Gasdermin-like protein het-Q1 (278 aa).

It belongs to the gasdermin family. In terms of assembly, homooligomer; forms a homooligomeric ring-shaped pore complex when inserted in the membrane. In terms of processing, the precursor form is cleaved by het-Q2, generating the pore-forming protein (Gasdermin-like protein het-Q1, N-terminal).

It localises to the cell membrane. Functionally, gasdermin-like protein involved in heterokaryon incompatibility, a process that ensures that during spontaneous vegetative cell fusion, only compatible cells from the same colony survive (non-self-recognition). In P.anserina, the het-q locus exists as 2 incompatible alleles, het-Q1 (this entry) and het-Q2 (AC P0DW09). This form constitutes the precursor of the pore-forming protein: during the allorecognition process, it is cleaved by het-Q2, releasing the N-terminal moiety (Gasdermin-like protein het-Q1, N-terminal) that binds to membranes and forms pores, triggering cell death. Pore-forming protein that causes membrane permeabilization and cell death. Released upon cleavage and maturation by het-Q2 and binds to membrane inner leaflet lipids. Homooligomerizes within the membrane and forms pores of 10-15 nanometers (nm) of inner diameter, triggering cell death. The chain is Gasdermin-like protein het-Q1 from Podospora anserina (strain S / ATCC MYA-4624 / DSM 980 / FGSC 10383) (Pleurage anserina).